Here is a 358-residue protein sequence, read N- to C-terminus: Magnesium-protoporphyrin IX monomethyl ester [oxidative] cyclase (358 aa).

It belongs to the AcsF family. Fe cation is required as a cofactor.

The enzyme catalyses Mg-protoporphyrin IX 13-monomethyl ester + 3 NADPH + 3 O2 + 2 H(+) = 3,8-divinyl protochlorophyllide a + 3 NADP(+) + 5 H2O. Its pathway is porphyrin-containing compound metabolism; chlorophyll biosynthesis (light-independent). In terms of biological role, catalyzes the formation of the isocyclic ring in chlorophyll biosynthesis. Mediates the cyclase reaction, which results in the formation of divinylprotochlorophyllide (Pchlide) characteristic of all chlorophylls from magnesium-protoporphyrin IX 13-monomethyl ester (MgPMME). The sequence is that of Magnesium-protoporphyrin IX monomethyl ester [oxidative] cyclase from Trichodesmium erythraeum (strain IMS101).